Here is a 77-residue protein sequence, read N- to C-terminus: Acyl carrier protein (77 aa).

Residues 2 to 77 (STIEERVKKV…EAIDYVVAHQ (76 aa)) enclose the Carrier domain. Residue Ser-37 is modified to O-(pantetheine 4'-phosphoryl)serine.

The protein belongs to the acyl carrier protein (ACP) family. Post-translationally, 4'-phosphopantetheine is transferred from CoA to a specific serine of apo-ACP by AcpS. This modification is essential for activity because fatty acids are bound in thioester linkage to the sulfhydryl of the prosthetic group.

The protein localises to the cytoplasm. Its pathway is lipid metabolism; fatty acid biosynthesis. In terms of biological role, carrier of the growing fatty acid chain in fatty acid biosynthesis. This is Acyl carrier protein from Chromohalobacter salexigens (strain ATCC BAA-138 / DSM 3043 / CIP 106854 / NCIMB 13768 / 1H11).